Here is a 175-residue protein sequence, read N- to C-terminus: Large ribosomal subunit protein bL9 (175 aa).

The protein belongs to the bacterial ribosomal protein bL9 family.

Functionally, binds to the 23S rRNA. This Orientia tsutsugamushi (strain Boryong) (Rickettsia tsutsugamushi) protein is Large ribosomal subunit protein bL9.